The sequence spans 269 residues: uncharacterized protein (269 aa).

Positions 152–197 (RYFSKPAYRNAFKANTIRATTAYKKVFNDPSLGSTYPLEVPLGKMS) constitute an RPE1 insert domain.

This is an uncharacterized protein from Rickettsia prowazekii (strain Madrid E).